We begin with the raw amino-acid sequence, 561 residues long: Transmembrane protein 209 (561 aa).

Ser11 is subject to Phosphoserine. Residues Val28 to Thr48 form a helical membrane-spanning segment. N-linked (GlcNAc...) asparagine glycosylation occurs at Asn57. The helical transmembrane segment at Tyr60–Phe80 threads the bilayer. At Ser98 the chain carries Phosphoserine. 2 disordered regions span residues Leu120–Thr156 and Ser200–Lys232. Over residues Ser138 to Pro152 the composition is skewed to low complexity. A phosphoserine mark is found at Ser201 and Ser248. A disordered region spans residues Glu250–Pro270. Over residues Ser260–Pro270 the composition is skewed to low complexity. A glycan (N-linked (GlcNAc...) asparagine) is linked at Asn274. Ser278 carries the phosphoserine modification.

In terms of assembly, interacts with NUP205.

The protein resides in the membrane. The protein localises to the nucleus envelope. It localises to the golgi apparatus. It is found in the cytoplasm. In terms of biological role, nuclear envelope protein which in association with NUP205, may be involved in nuclear transport of various nuclear proteins in addition to MYC. In Mus musculus (Mouse), this protein is Transmembrane protein 209 (Tmem209).